The following is a 658-amino-acid chain: Pentatricopeptide repeat-containing protein 7, mitochondrial (658 aa).

The N-terminal 29 residues, 1–29 (MRNCVSPLLFAWTKHLRLREFKIPFPNRL), are a transit peptide targeting the mitochondrion. PPR repeat units follow at residues 130–164 (VKKRFAECFDKNPDLCLIVYSKLEVETLAKITPIW) and 220–254 (LYVELCLVYHFHNSHLGMDSSTVSNLKRFCFSESL).

The protein localises to the mitochondrion. In terms of biological role, mitochondrial RNA-binding protein required for the stability of the atp6 mRNA. This Schizosaccharomyces pombe (strain 972 / ATCC 24843) (Fission yeast) protein is Pentatricopeptide repeat-containing protein 7, mitochondrial (ppr7).